Reading from the N-terminus, the 84-residue chain is MGRGGGMGNPVNVGIAVQADWENREFISNISLNVRRLFDFLLRFEATTKSKLASLNEKLDILERKLEVLEVQVGSATTNPSVFN.

A coiled-coil region spans residues 45–79 (EATTKSKLASLNEKLDILERKLEVLEVQVGSATTN).

The protein belongs to the BRK1 family. As to quaternary structure, binds SCAR. As to expression, expressed in expanding leaves, embryos, ear primordia, and roots. Very low expression in mature leaf tissue.

It localises to the cytoplasm. It is found in the cytoskeleton. In terms of biological role, promotes multiple, actin-dependent cell polarization events in the developing leaf epidermis. Involved in regulation of actin and microtubule organization. Part of a WAVE complex that activates the Arp2/3 complex. This chain is Protein BRICK1 (BRK1), found in Zea mays (Maize).